The primary structure comprises 389 residues: M protein, serotype 49 (389 aa).

The signal sequence occupies residues 1-41; the sequence is MARKDTNKQYSLRKLKTGTASVAVAVAVLGAGFANQTEVKA. One copy of the A-1 repeat lies at 89 to 99; sequence EERQKNLEKLE. Residues 89 to 135 are 2 X repeats, type A; it reads EERQKNLEKLEHQSQVAADKHYQEQAKKHQEYKQEQEERQKNQEQLE. Basic and acidic residues-rich tracts occupy residues 93–147, 157–182, 194–204, 212–224, 236–246, and 254–270; these read KNLE…KRYQ, ETEK…EAKK, EHQKLKEEKQI, LSRD…EAKK, and LSRD…KVEA. Disordered stretches follow at residues 93-182, 194-224, and 236-271; these read KNLE…EAKK, EHQK…EAKK, and EHQK…VEAD. Residues 125-135 form an A-2 repeat; it reads EERQKNQEQLE. 3 C repeats span residues 154–188, 196–230, and 238–272; these read QQLE…EADL and QKLK…EADL. 4 D repeats span residues 305-310, 311-316, 319-324, and 326-331; these read ARLEAE, AKALKE, AKQAEE, and AKLKGN. The disordered stretch occupies residues 326–362; sequence AKLKGNQTPNAKVAPQANRSRSAMTQQKRTLPSTGET. Over residues 342-362 the composition is skewed to polar residues; it reads ANRSRSAMTQQKRTLPSTGET. The LPXTG sorting signal motif lies at 356 to 360; it reads LPSTG. A Pentaglycyl murein peptidoglycan amidated threonine modification is found at T359. Positions 360–389 are cleaved as a propeptide — removed by sortase; it reads GETANPFFTAAAATVMVSAGMLALKRKEEN.

It belongs to the M protein family. Homodimer.

The protein resides in the secreted. Its subcellular location is the cell wall. Functionally, this protein is one of the different antigenic serotypes of protein M. Protein M is closely associated with virulence of the bacterium and can render the organism resistant to phagocytosis. The sequence is that of M protein, serotype 49 (emm49) from Streptococcus pyogenes serotype M49.